A 366-amino-acid polypeptide reads, in one-letter code: Peptide chain release factor 2 (366 aa).

Gln-251 carries the post-translational modification N5-methylglutamine.

It belongs to the prokaryotic/mitochondrial release factor family. Methylated by PrmC. Methylation increases the termination efficiency of RF2.

The protein localises to the cytoplasm. In terms of biological role, peptide chain release factor 2 directs the termination of translation in response to the peptide chain termination codons UGA and UAA. In Listeria monocytogenes serovar 1/2a (strain ATCC BAA-679 / EGD-e), this protein is Peptide chain release factor 2 (prfB).